A 668-amino-acid chain; its full sequence is Kelch repeat-containing protein ARB_01230 (668 aa).

The signal sequence occupies residues 1–32 (MEVGRFASKSASMTYLLLVLLVGFILPQQGQH). Residues 33 to 522 (AHARTLARRD…GSGSDGPNIA (490 aa)) lie on the Extracellular side of the membrane. N-linked (GlcNAc...) asparagine glycosylation occurs at N60. 2 Kelch repeats span residues 62–108 (TLYI…PRGD) and 125–176 (SLFL…ANIP). N-linked (GlcNAc...) asparagine glycans are attached at residues N251 and N291. Kelch repeat units follow at residues 283–331 (ILGL…AVAA), 340–395 (QVYL…IWNS), 396–445 (QIVV…ASQT), and 463–509 (VQSV…GPHA). A helical membrane pass occupies residues 523–543 (AIVAGVIAGCLGVLAIYLGFV). Residues 544–668 (TWLYRRRLAI…PRQTLRVINQ (125 aa)) lie on the Cytoplasmic side of the membrane. A disordered region spans residues 611 to 642 (DNQRHNHTRSSSGGNFDHLAQPERPSTSSSVE).

Its subcellular location is the membrane. The protein resides in the secreted. The polypeptide is Kelch repeat-containing protein ARB_01230 (Arthroderma benhamiae (strain ATCC MYA-4681 / CBS 112371) (Trichophyton mentagrophytes)).